The chain runs to 523 residues: Putative F-box protein At1g30925 (523 aa).

The 41-residue stretch at 4-44 folds into the F-box domain; that stretch reads FPNDDLVYEILLRLPAKSVARCSCVSKLRRSILSRQDFTEL.

The chain is Putative F-box protein At1g30925 from Arabidopsis thaliana (Mouse-ear cress).